The chain runs to 295 residues: Protoheme IX farnesyltransferase (295 aa).

A run of 9 helical transmembrane segments spans residues 8-28 (VTKP…FLLA), 35-55 (YPLF…GCVF), 74-94 (VLVK…LLGI), 106-125 (PLAM…VYSL), 132-152 (VYGT…GYCA), 162-182 (LILL…IAIF), 208-228 (ITLY…GGYA), 233-253 (LVVA…GYKA), and 264-284 (FVFS…DFMV).

The protein belongs to the UbiA prenyltransferase family. Protoheme IX farnesyltransferase subfamily.

The protein resides in the cell inner membrane. The catalysed reaction is heme b + (2E,6E)-farnesyl diphosphate + H2O = Fe(II)-heme o + diphosphate. It participates in porphyrin-containing compound metabolism; heme O biosynthesis; heme O from protoheme: step 1/1. Converts heme B (protoheme IX) to heme O by substitution of the vinyl group on carbon 2 of heme B porphyrin ring with a hydroxyethyl farnesyl side group. The sequence is that of Protoheme IX farnesyltransferase from Cronobacter sakazakii (strain ATCC BAA-894) (Enterobacter sakazakii).